The primary structure comprises 396 residues: Phosphoglycerate kinase (396 aa).

Substrate is bound by residues 21–23, Arg-36, 59–62, Arg-119, and Arg-156; these read DFN and HLGK. ATP contacts are provided by residues Lys-206, Gly-294, Glu-325, and 352–355; that span reads GGDS.

Belongs to the phosphoglycerate kinase family. In terms of assembly, monomer.

The protein localises to the cytoplasm. The catalysed reaction is (2R)-3-phosphoglycerate + ATP = (2R)-3-phospho-glyceroyl phosphate + ADP. Its pathway is carbohydrate degradation; glycolysis; pyruvate from D-glyceraldehyde 3-phosphate: step 2/5. In Listeria welshimeri serovar 6b (strain ATCC 35897 / DSM 20650 / CCUG 15529 / CIP 8149 / NCTC 11857 / SLCC 5334 / V8), this protein is Phosphoglycerate kinase.